The following is a 396-amino-acid chain: Probable arginine kinase F46H5.3 (396 aa).

The Phosphagen kinase N-terminal domain occupies K47–N129. Position 102 to 106 (G102 to Y106) interacts with substrate. The 238-residue stretch at F159–A396 folds into the Phosphagen kinase C-terminal domain. Residues S162 to R166 and H226 each bind ATP. Substrate is bound at residue E266. R270 lines the ATP pocket. Residue C312 coordinates substrate. ATP-binding positions include R321–H325, R349–E354, and D364. E354 is a binding site for substrate.

The protein belongs to the ATP:guanido phosphotransferase family.

The enzyme catalyses L-arginine + ATP = N(omega)-phospho-L-arginine + ADP + H(+). In Caenorhabditis elegans, this protein is Probable arginine kinase F46H5.3.